The primary structure comprises 341 residues: Ferredoxin--NADP reductase (341 aa).

FAD-binding residues include Glu-36, Gln-44, Phe-49, Val-89, Phe-123, Asp-289, and Thr-329.

Belongs to the ferredoxin--NADP reductase type 2 family. Homodimer. FAD is required as a cofactor.

It carries out the reaction 2 reduced [2Fe-2S]-[ferredoxin] + NADP(+) + H(+) = 2 oxidized [2Fe-2S]-[ferredoxin] + NADPH. This is Ferredoxin--NADP reductase from Ligilactobacillus salivarius (strain UCC118) (Lactobacillus salivarius).